The primary structure comprises 338 residues: Fructose-1,6-bisphosphatase class 1 (338 aa).

Mg(2+)-binding residues include Glu94, Asp116, Leu118, and Asp119. Residues 119–122 (DGSS), Asn210, and Lys276 each bind substrate. Glu282 is a binding site for Mg(2+).

This sequence belongs to the FBPase class 1 family. In terms of assembly, homotetramer. Requires Mg(2+) as cofactor.

It localises to the cytoplasm. The catalysed reaction is beta-D-fructose 1,6-bisphosphate + H2O = beta-D-fructose 6-phosphate + phosphate. The protein operates within carbohydrate biosynthesis; gluconeogenesis. The protein is Fructose-1,6-bisphosphatase class 1 of Paraburkholderia phytofirmans (strain DSM 17436 / LMG 22146 / PsJN) (Burkholderia phytofirmans).